The following is a 274-amino-acid chain: uncharacterized protein (274 aa).

Residues 1–30 (MTVYTPTSERQAPATTHRQMWALGDYAAIA) form the signal peptide.

This sequence to M.tuberculosis Rv1405c.

This is an uncharacterized protein from Mycobacterium tuberculosis (strain CDC 1551 / Oshkosh).